A 219-amino-acid polypeptide reads, in one-letter code: Protein-L-isoaspartate O-methyltransferase (219 aa).

Residue serine 66 is part of the active site.

The protein belongs to the methyltransferase superfamily. L-isoaspartyl/D-aspartyl protein methyltransferase family.

Its subcellular location is the cytoplasm. The catalysed reaction is [protein]-L-isoaspartate + S-adenosyl-L-methionine = [protein]-L-isoaspartate alpha-methyl ester + S-adenosyl-L-homocysteine. Its function is as follows. Catalyzes the methyl esterification of L-isoaspartyl residues in peptides and proteins that result from spontaneous decomposition of normal L-aspartyl and L-asparaginyl residues. It plays a role in the repair and/or degradation of damaged proteins. This is Protein-L-isoaspartate O-methyltransferase from Xanthobacter autotrophicus (strain ATCC BAA-1158 / Py2).